We begin with the raw amino-acid sequence, 353 residues long: Uroporphyrinogen decarboxylase (353 aa).

Substrate contacts are provided by residues 30-34 (RQAGR), D79, Y154, S209, and H332.

The protein belongs to the uroporphyrinogen decarboxylase family. Homodimer.

The protein resides in the cytoplasm. The enzyme catalyses uroporphyrinogen III + 4 H(+) = coproporphyrinogen III + 4 CO2. Its pathway is porphyrin-containing compound metabolism; protoporphyrin-IX biosynthesis; coproporphyrinogen-III from 5-aminolevulinate: step 4/4. In terms of biological role, catalyzes the decarboxylation of four acetate groups of uroporphyrinogen-III to yield coproporphyrinogen-III. This is Uroporphyrinogen decarboxylase from Mycolicibacterium smegmatis (strain ATCC 700084 / mc(2)155) (Mycobacterium smegmatis).